The sequence spans 156 residues: Small ribosomal subunit protein uS7 (156 aa).

Belongs to the universal ribosomal protein uS7 family. In terms of assembly, part of the 30S ribosomal subunit. Contacts proteins S9 and S11.

Functionally, one of the primary rRNA binding proteins, it binds directly to 16S rRNA where it nucleates assembly of the head domain of the 30S subunit. Is located at the subunit interface close to the decoding center, probably blocks exit of the E-site tRNA. The polypeptide is Small ribosomal subunit protein uS7 (Neisseria gonorrhoeae (strain ATCC 700825 / FA 1090)).